A 308-amino-acid polypeptide reads, in one-letter code: Alternaria stem canker resistance protein 1 (308 aa).

6 consecutive transmembrane segments (helical) span residues Tyr-21–Leu-41, Phe-82–Phe-102, Leu-128–Glu-148, Val-165–Ala-185, Phe-213–Ile-233, and Ile-254–Trp-274. The TLC domain maps to Asn-73–Leu-287.

The protein localises to the endoplasmic reticulum membrane. Functionally, mediates resistance to sphinganine-analog mycotoxins (SAMs) by restoring the sphingolipid biosynthesis. Could salvage the transport of GPI-anchored proteins from the endoplasmic reticulum to the Golgi apparatus in ceramides-depleted cells after SAM exposure. The protein is Alternaria stem canker resistance protein 1 of Solanum lycopersicum (Tomato).